The sequence spans 158 residues: Protein Smg homolog (158 aa).

The protein belongs to the Smg family.

This Herminiimonas arsenicoxydans protein is Protein Smg homolog.